Consider the following 145-residue polypeptide: UPF0201 protein LS215_1276 (145 aa).

It belongs to the UPF0201 family.

The sequence is that of UPF0201 protein LS215_1276 from Saccharolobus islandicus (strain L.S.2.15 / Lassen #1) (Sulfolobus islandicus).